A 358-amino-acid chain; its full sequence is Phospho-N-acetylmuramoyl-pentapeptide-transferase (358 aa).

Transmembrane regions (helical) follow at residues Tyr-21–Gly-41, Thr-71–Leu-91, Tyr-95–Tyr-115, Phe-133–Ala-153, Val-166–Ser-186, Gly-197–Ala-217, Ala-234–Phe-254, Val-261–Leu-281, Leu-286–Val-306, and Ile-337–Ile-357.

The protein belongs to the glycosyltransferase 4 family. MraY subfamily. Requires Mg(2+) as cofactor.

It is found in the cell inner membrane. The catalysed reaction is UDP-N-acetyl-alpha-D-muramoyl-L-alanyl-gamma-D-glutamyl-meso-2,6-diaminopimeloyl-D-alanyl-D-alanine + di-trans,octa-cis-undecaprenyl phosphate = di-trans,octa-cis-undecaprenyl diphospho-N-acetyl-alpha-D-muramoyl-L-alanyl-D-glutamyl-meso-2,6-diaminopimeloyl-D-alanyl-D-alanine + UMP. Its pathway is cell wall biogenesis; peptidoglycan biosynthesis. Its function is as follows. Catalyzes the initial step of the lipid cycle reactions in the biosynthesis of the cell wall peptidoglycan: transfers peptidoglycan precursor phospho-MurNAc-pentapeptide from UDP-MurNAc-pentapeptide onto the lipid carrier undecaprenyl phosphate, yielding undecaprenyl-pyrophosphoryl-MurNAc-pentapeptide, known as lipid I. This chain is Phospho-N-acetylmuramoyl-pentapeptide-transferase, found in Nitrosococcus oceani (strain ATCC 19707 / BCRC 17464 / JCM 30415 / NCIMB 11848 / C-107).